The sequence spans 277 residues: NH(3)-dependent NAD(+) synthetase (277 aa).

Position 47-54 (47-54) interacts with ATP; it reads GISGGQDS. Residue Asp53 coordinates Mg(2+). A deamido-NAD(+)-binding site is contributed by Arg141. Thr161 serves as a coordination point for ATP. Mg(2+) is bound at residue Glu166. 2 residues coordinate deamido-NAD(+): Lys174 and Asp181. ATP contacts are provided by Lys190 and Thr212. 261–262 serves as a coordination point for deamido-NAD(+); that stretch reads HK.

Belongs to the NAD synthetase family. Homodimer.

It catalyses the reaction deamido-NAD(+) + NH4(+) + ATP = AMP + diphosphate + NAD(+) + H(+). The protein operates within cofactor biosynthesis; NAD(+) biosynthesis; NAD(+) from deamido-NAD(+) (ammonia route): step 1/1. In terms of biological role, catalyzes the ATP-dependent amidation of deamido-NAD to form NAD. Uses ammonia as a nitrogen source. This is NH(3)-dependent NAD(+) synthetase from Lactobacillus gasseri (strain ATCC 33323 / DSM 20243 / BCRC 14619 / CIP 102991 / JCM 1131 / KCTC 3163 / NCIMB 11718 / NCTC 13722 / AM63).